We begin with the raw amino-acid sequence, 303 residues long: Porphobilinogen deaminase (303 aa).

An S-(dipyrrolylmethanemethyl)cysteine modification is found at Cys-241.

It belongs to the HMBS family. As to quaternary structure, monomer. It depends on dipyrromethane as a cofactor.

The catalysed reaction is 4 porphobilinogen + H2O = hydroxymethylbilane + 4 NH4(+). The protein operates within porphyrin-containing compound metabolism; protoporphyrin-IX biosynthesis; coproporphyrinogen-III from 5-aminolevulinate: step 2/4. Its pathway is porphyrin-containing compound metabolism; chlorophyll biosynthesis. In terms of biological role, tetrapolymerization of the monopyrrole PBG into the hydroxymethylbilane pre-uroporphyrinogen in several discrete steps. The protein is Porphobilinogen deaminase of Roseiflexus sp. (strain RS-1).